Here is a 250-residue protein sequence, read N- to C-terminus: tRNA pseudouridine synthase A (250 aa).

Asp-52 functions as the Nucleophile in the catalytic mechanism. Tyr-111 contacts substrate.

The protein belongs to the tRNA pseudouridine synthase TruA family. In terms of assembly, homodimer.

It catalyses the reaction uridine(38/39/40) in tRNA = pseudouridine(38/39/40) in tRNA. Formation of pseudouridine at positions 38, 39 and 40 in the anticodon stem and loop of transfer RNAs. The sequence is that of tRNA pseudouridine synthase A from Methylobacterium sp. (strain 4-46).